Here is a 73-residue protein sequence, read N- to C-terminus: Translation initiation factor IF-1 (73 aa).

One can recognise an S1-like domain in the interval 1 to 73 (MAKKDGVIEI…NRGRIVYRYR (73 aa)).

It belongs to the IF-1 family. In terms of assembly, component of the 30S ribosomal translation pre-initiation complex which assembles on the 30S ribosome in the order IF-2 and IF-3, IF-1 and N-formylmethionyl-tRNA(fMet); mRNA recruitment can occur at any time during PIC assembly.

It is found in the cytoplasm. In terms of biological role, one of the essential components for the initiation of protein synthesis. Stabilizes the binding of IF-2 and IF-3 on the 30S subunit to which N-formylmethionyl-tRNA(fMet) subsequently binds. Helps modulate mRNA selection, yielding the 30S pre-initiation complex (PIC). Upon addition of the 50S ribosomal subunit IF-1, IF-2 and IF-3 are released leaving the mature 70S translation initiation complex. The sequence is that of Translation initiation factor IF-1 from Acidothermus cellulolyticus (strain ATCC 43068 / DSM 8971 / 11B).